The chain runs to 885 residues: Envelope glycoprotein B (885 aa).

Positions 1–34 (MRPRGTPPSFLPLPVLLALAVIAAAGRAAPAAAA) are cleaved as a signal peptide. Residues 29–46 (APAAAAAPTADPAATPAL) show a composition bias toward low complexity. The disordered stretch occupies residues 29–74 (APAAAAAPTADPAATPALPEDEEVPDEDGEGVATPAPAANASVEAG). The Virion surface portion of the chain corresponds to 35–759 (APTADPAATP…SGVSSFLSNP (725 aa)). The segment covering 47–58 (PEDEEVPDEDGE) has biased composition (acidic residues). Asparagine 68 and asparagine 122 each carry an N-linked (GlcNAc...) asparagine; by host glycan. 5 disulfide bridges follow: cysteine 97–cysteine 558, cysteine 114–cysteine 514, cysteine 188–cysteine 252, cysteine 345–cysteine 393, and cysteine 581–cysteine 618. Involved in fusion and/or binding to host membrane stretches follow at residues 154-160 (VWFGHRY) and 239-246 (RVEAFHRY). N-linked (GlcNAc...) asparagine; by host glycans are attached at residues asparagine 379 and asparagine 411. The interval 455–478 (RRPAGGDPGEAATPGPSVDPPSVE) is disordered. Asparagine 659 is a glycosylation site (N-linked (GlcNAc...) asparagine; by host). Hydrophobic membrane proximal region stretches follow at residues 704–757 (IDTV…SFLS) and 716–756 (LFAG…SSFL). A helical transmembrane segment spans residues 760–780 (FGALAVGLLVLAGLAAAFFAF). At 781-885 (RYVMRLQRNP…PLRDTDEEEL (105 aa)) the chain is on the intravirion side. The Golgi targeting motif lies at 834–837 (YMAL). Residues 866-885 (MRKRARPRYSPLRDTDEEEL) form a disordered region. The Internalization motif motif lies at 874-877 (YSPL).

This sequence belongs to the herpesviridae glycoprotein B family. In terms of assembly, homotrimer; disulfide-linked. Binds to heparan sulfate proteoglycans. Interacts with gH/gL heterodimer.

The protein resides in the virion membrane. The protein localises to the host cell membrane. It localises to the host endosome membrane. Its subcellular location is the host Golgi apparatus membrane. Its function is as follows. Envelope glycoprotein that forms spikes at the surface of virion envelope. Essential for the initial attachment to heparan sulfate moieties of the host cell surface proteoglycans. Involved in fusion of viral and cellular membranes leading to virus entry into the host cell. Following initial binding to its host receptors, membrane fusion is mediated by the fusion machinery composed at least of gB and the heterodimer gH/gL. May be involved in the fusion between the virion envelope and the outer nuclear membrane during virion egress. This Herpes simplex virus type 2 (strain SA8) (Simian agent 8) protein is Envelope glycoprotein B.